A 303-amino-acid chain; its full sequence is Sulfate adenylyltransferase subunit 2 (303 aa).

Belongs to the PAPS reductase family. CysD subfamily. Heterodimer composed of CysD, the smaller subunit, and CysN.

It catalyses the reaction sulfate + ATP + H(+) = adenosine 5'-phosphosulfate + diphosphate. Its pathway is sulfur metabolism; hydrogen sulfide biosynthesis; sulfite from sulfate: step 1/3. With CysN forms the ATP sulfurylase (ATPS) that catalyzes the adenylation of sulfate producing adenosine 5'-phosphosulfate (APS) and diphosphate, the first enzymatic step in sulfur assimilation pathway. APS synthesis involves the formation of a high-energy phosphoric-sulfuric acid anhydride bond driven by GTP hydrolysis by CysN coupled to ATP hydrolysis by CysD. The sequence is that of Sulfate adenylyltransferase subunit 2 from Aliarcobacter butzleri (strain RM4018) (Arcobacter butzleri).